A 549-amino-acid chain; its full sequence is Probable acyl-activating enzyme 10 (549 aa).

This sequence belongs to the ATP-dependent AMP-binding enzyme family. In terms of tissue distribution, expressed at low levels in roots.

Functionally, may act as an acid--thiol ligase that activates carboxylic acids by forming acyl-CoAs. This chain is Probable acyl-activating enzyme 10 (AEE10), found in Arabidopsis thaliana (Mouse-ear cress).